The sequence spans 352 residues: NAD(P)H oxidoreductase RTN4IP1, mitochondrial (352 aa).

Residues 11-348 (ESLDLLEYKT…NSNSNGKIII (338 aa)) enclose the Enoyl reductase (ER) domain. Residues Val165, Tyr206, Ala296, and Phe298 each contribute to the NADPH site.

Belongs to the zinc-containing alcohol dehydrogenase family. Quinone oxidoreductase subfamily.

It is found in the mitochondrion matrix. The catalysed reaction is a quinone + NADH + H(+) = a quinol + NAD(+). The enzyme catalyses a quinone + NADPH + H(+) = a quinol + NADP(+). It functions in the pathway cofactor biosynthesis; ubiquinone biosynthesis. NAD(P)H oxidoreductase involved in the ubiquinone biosynthetic pathway. Required for the O-methyltransferase activity of coq3. This Dictyostelium discoideum (Social amoeba) protein is NAD(P)H oxidoreductase RTN4IP1, mitochondrial (rtn4ip1).